The following is a 250-amino-acid chain: MNRITVDQVRDEAKNVRTLFFRWDHDVKPGQFVMVWLPGLGEIPMSLSYVGSPKGITVKAYGKVSQAMIDMEPGHEFYIRGPYGNGFQIESGRKLIIGGGSGIASLLPIADSDTDALISAKTKEELIFTDRFPESRLFIATDDGSEGFHGFPHEFLDRLDISVYRKIYVCGPEPMLYRVMQKLASMNARAEFSLERTMKCGIGICDSCSVGGLQVCRQGPVFDIEQLRNNPEFGISRTTYSGKRVYLNMK.

The FAD-binding FR-type domain occupies 1–89 (MNRITVDQVR…RGPYGNGFQI (89 aa)). 4 residues coordinate [2Fe-2S] cluster: cysteine 200, cysteine 205, cysteine 208, and cysteine 216.

Belongs to the PyrK family. As to quaternary structure, heterotetramer of 2 PyrK and 2 PyrD type B subunits. Requires [2Fe-2S] cluster as cofactor. The cofactor is FAD.

It participates in pyrimidine metabolism; UMP biosynthesis via de novo pathway; orotate from (S)-dihydroorotate (NAD(+) route): step 1/1. Responsible for channeling the electrons from the oxidation of dihydroorotate from the FMN redox center in the PyrD type B subunit to the ultimate electron acceptor NAD(+). The protein is Probable dihydroorotate dehydrogenase B (NAD(+)), electron transfer subunit of Thermoplasma acidophilum (strain ATCC 25905 / DSM 1728 / JCM 9062 / NBRC 15155 / AMRC-C165).